Consider the following 442-residue polypeptide: 23S rRNA (uracil(1939)-C(5))-methyltransferase RlmD (442 aa).

The TRAM domain maps to 10–75 (AKQTAKNCCK…RQYGRAKANK (66 aa)). Residues Cys88, Cys94, Cys97, and Cys173 each contribute to the [4Fe-4S] cluster site. 6 residues coordinate S-adenosyl-L-methionine: Gln276, Phe305, Asn310, Glu326, Asn353, and Asp374. Cys400 (nucleophile) is an active-site residue.

This sequence belongs to the class I-like SAM-binding methyltransferase superfamily. RNA M5U methyltransferase family. RlmD subfamily.

The catalysed reaction is uridine(1939) in 23S rRNA + S-adenosyl-L-methionine = 5-methyluridine(1939) in 23S rRNA + S-adenosyl-L-homocysteine + H(+). Catalyzes the formation of 5-methyl-uridine at position 1939 (m5U1939) in 23S rRNA. In Haemophilus ducreyi (strain 35000HP / ATCC 700724), this protein is 23S rRNA (uracil(1939)-C(5))-methyltransferase RlmD.